The primary structure comprises 126 residues: Histone H2B type 2-E (126 aa).

Residues 1 to 12 show a composition bias toward low complexity; the sequence is MPEPAKSAPAPK. Residues 1–35 form a disordered region; the sequence is MPEPAKSAPAPKKGSKKAVTKAQKKDGKKRKRSRK. Pro2 carries the N-acetylproline modification. ADP-ribosyl glutamic acid is present on Glu3. An N6-(2-hydroxyisobutyryl)lysine; alternate modification is found at Lys6. Lys6 is modified (N6-(beta-hydroxybutyryl)lysine; alternate). Lys6 is modified (N6-acetyllysine; alternate). At Lys6 the chain carries N6-butyryllysine; alternate. The residue at position 6 (Lys6) is an N6-crotonyllysine; alternate. Lys6 is modified (N6-lactoyllysine; alternate). Lys6 participates in a covalent cross-link: Glycyl lysine isopeptide (Lys-Gly) (interchain with G-Cter in SUMO2); alternate. Ser7 is modified (ADP-ribosylserine). Lys12 is subject to N6-(beta-hydroxybutyryl)lysine; alternate. An N6-acetyllysine; alternate mark is found at Lys12 and Lys13. N6-crotonyllysine; alternate occurs at positions 12 and 13. Lys12 carries the N6-lactoyllysine; alternate modification. Lys13 bears the N6-(2-hydroxyisobutyryl)lysine; alternate mark. Ser15 is subject to Phosphoserine; by STK4/MST1. N6-acetyllysine; alternate occurs at positions 16, 17, 21, and 24. Lys16, Lys17, Lys21, and Lys24 each carry N6-crotonyllysine; alternate. Lys16, Lys17, Lys21, and Lys24 each carry N6-lactoyllysine; alternate. An N6-(beta-hydroxybutyryl)lysine; alternate mark is found at Lys17 and Lys21. Lys17 carries the N6-glutaryllysine; alternate modification. N6-(2-hydroxyisobutyryl)lysine; alternate is present on residues Lys21 and Lys24. Residue Lys21 is modified to N6-butyryllysine; alternate. Lys21 participates in a covalent cross-link: Glycyl lysine isopeptide (Lys-Gly) (interchain with G-Cter in SUMO2); alternate. Residue Lys25 is modified to N6-(2-hydroxyisobutyryl)lysine. Lys35 is subject to N6-(2-hydroxyisobutyryl)lysine; alternate. At Lys35 the chain carries N6-(beta-hydroxybutyryl)lysine; alternate. Lys35 bears the N6-crotonyllysine; alternate mark. Lys35 is subject to N6-glutaryllysine; alternate. The residue at position 35 (Lys35) is an N6-succinyllysine; alternate. A Glycyl lysine isopeptide (Lys-Gly) (interchain with G-Cter in ubiquitin); alternate cross-link involves residue Lys35. Glu36 carries the polyADP-ribosyl glutamic acid modification. Residue Ser37 is modified to Phosphoserine; by AMPK. N6-(2-hydroxyisobutyryl)lysine; alternate is present on residues Lys44, Lys47, and Lys58. Lys44 bears the N6-lactoyllysine; alternate mark. Residues Lys44 and Lys47 each carry the N6-glutaryllysine; alternate modification. N6-methyllysine; alternate is present on Lys47. Lys58 is modified (N6,N6-dimethyllysine; alternate). Arg80 is subject to Dimethylated arginine. Lys86 bears the N6-(2-hydroxyisobutyryl)lysine; alternate mark. Lys86 bears the N6-(beta-hydroxybutyryl)lysine; alternate mark. Lys86 carries the post-translational modification N6-acetyllysine; alternate. Lys86 carries the N6-lactoyllysine; alternate modification. Lys86 is subject to N6,N6,N6-trimethyllysine; alternate. Omega-N-methylarginine occurs at positions 87 and 93. Lys109 is subject to N6-(2-hydroxyisobutyryl)lysine; alternate. Lys109 carries the N6-lactoyllysine; alternate modification. The residue at position 109 (Lys109) is an N6-glutaryllysine; alternate. Residue Lys109 is modified to N6-methyllysine; alternate. An O-linked (GlcNAc) serine glycan is attached at Ser113. Thr116 carries the phosphothreonine modification. An N6-(2-hydroxyisobutyryl)lysine; alternate mark is found at Lys117 and Lys121. N6-(beta-hydroxybutyryl)lysine; alternate occurs at positions 117 and 121. N6-lactoyllysine; alternate is present on residues Lys117 and Lys121. 2 positions are modified to N6-glutaryllysine; alternate: Lys117 and Lys121. An N6-succinyllysine; alternate mark is found at Lys117 and Lys121. At Lys117 the chain carries N6-malonyllysine; alternate. Lys117 bears the N6-methylated lysine; alternate mark. Lys121 participates in a covalent cross-link: Glycyl lysine isopeptide (Lys-Gly) (interchain with G-Cter in ubiquitin); alternate.

This sequence belongs to the histone H2B family. As to quaternary structure, the nucleosome is a histone octamer containing two molecules each of H2A, H2B, H3 and H4 assembled in one H3-H4 heterotetramer and two H2A-H2B heterodimers. The octamer wraps approximately 147 bp of DNA. Monoubiquitination at Lys-35 (H2BK34Ub) by the MSL1/MSL2 dimer is required for histone H3 'Lys-4' (H3K4me) and 'Lys-79' (H3K79me) methylation and transcription activation at specific gene loci, such as HOXA9 and MEIS1 loci. Similarly, monoubiquitination at Lys-121 (H2BK120Ub) by the RNF20/40 complex gives a specific tag for epigenetic transcriptional activation and is also prerequisite for histone H3 'Lys-4' and 'Lys-79' methylation. It also functions cooperatively with the FACT dimer to stimulate elongation by RNA polymerase II. H2BK120Ub also acts as a regulator of mRNA splicing: deubiquitination by USP49 is required for efficient cotranscriptional splicing of a large set of exons. In terms of processing, phosphorylation at Ser-37 (H2BS36ph) by AMPK in response to stress promotes transcription. Phosphorylated on Ser-15 (H2BS14ph) by STK4/MST1 during apoptosis; which facilitates apoptotic chromatin condensation. Also phosphorylated on Ser-15 in response to DNA double strand breaks (DSBs), and in correlation with somatic hypermutation and immunoglobulin class-switch recombination. Post-translationally, glcNAcylation at Ser-113 promotes monoubiquitination of Lys-121. It fluctuates in response to extracellular glucose, and associates with transcribed genes. ADP-ribosylated by PARP1 or PARP2 on Ser-7 (H2BS6ADPr) in response to DNA damage. H2BS6ADPr promotes recruitment of CHD1L. Mono-ADP-ribosylated on Glu-3 (H2BE2ADPr) by PARP3 in response to single-strand breaks. Poly ADP-ribosylation on Glu-36 (H2BE35ADPr) by PARP1 regulates adipogenesis: it inhibits phosphorylation at Ser-37 (H2BS36ph), thereby blocking expression of pro-adipogenetic genes. In terms of processing, crotonylation (Kcr) is specifically present in male germ cells and marks testis-specific genes in post-meiotic cells, including X-linked genes that escape sex chromosome inactivation in haploid cells. Crotonylation marks active promoters and enhancers and confers resistance to transcriptional repressors. It is also associated with post-meiotically activated genes on autosomes. Post-translationally, lactylated in macrophages by EP300/P300 by using lactoyl-CoA directly derived from endogenous or exogenous lactate, leading to stimulates gene transcription.

The protein resides in the nucleus. The protein localises to the chromosome. Core component of nucleosome. Nucleosomes wrap and compact DNA into chromatin, limiting DNA accessibility to the cellular machineries which require DNA as a template. Histones thereby play a central role in transcription regulation, DNA repair, DNA replication and chromosomal stability. DNA accessibility is regulated via a complex set of post-translational modifications of histones, also called histone code, and nucleosome remodeling. In terms of biological role, has broad antibacterial activity. May contribute to the formation of the functional antimicrobial barrier of the colonic epithelium, and to the bactericidal activity of amniotic fluid. This chain is Histone H2B type 2-E, found in Homo sapiens (Human).